The following is a 156-amino-acid chain: Small ribosomal subunit protein uS7 (156 aa).

It belongs to the universal ribosomal protein uS7 family. As to quaternary structure, part of the 30S ribosomal subunit. Contacts proteins S9 and S11.

Its function is as follows. One of the primary rRNA binding proteins, it binds directly to 16S rRNA where it nucleates assembly of the head domain of the 30S subunit. Is located at the subunit interface close to the decoding center, probably blocks exit of the E-site tRNA. The polypeptide is Small ribosomal subunit protein uS7 (Corynebacterium jeikeium (strain K411)).